We begin with the raw amino-acid sequence, 858 residues long: Putative glutamate--cysteine ligase 2-3 (858 aa).

A carboxylate-amine ligase region spans residues Met-1–Leu-372. The tract at residues Gly-373–Arg-858 is unknown.

This sequence in the N-terminal section; belongs to the glutamate--cysteine ligase type 2 family. YbdK subfamily.

It catalyses the reaction L-cysteine + L-glutamate + ATP = gamma-L-glutamyl-L-cysteine + ADP + phosphate + H(+). Functionally, ATP-dependent carboxylate-amine ligase which exhibits weak glutamate--cysteine ligase activity. The sequence is that of Putative glutamate--cysteine ligase 2-3 from Frankia alni (strain DSM 45986 / CECT 9034 / ACN14a).